Consider the following 563-residue polypeptide: MAGKAKFCAPEIQDNPDGWGPCSVPTAFKDIPYQPFSKADRLGKVSDWTGSVYQDRRYANKYQSQFGTGNQMFSYYHEEDETSFQLVDTSRTQRPGYMRNRNRFNQRGGYRRDNRGGRFQGQGGNMGMQNLSRGRDTRNKFQRKMQRNWGGGRHWSDKKTGGMHKRVASVTVREEWKVLEDGELDFPRLSKLNLPNVEEPETLYECGSVEYYDKAYDRVTTKNEVPLVGVNRVFHKVTTTDDPIISKLLSQGNVFATDAIISTLMTCTRSNYSWDIVVQRVGSKLFFDKRDDSEFDLLTVGETANDLNIDETSGINTPTNLSLEATFINQNFSQQVLKRGEVKTFDHPNPFVTDEDDSTVASVCYRYRKWDLGDGIQLIVRCEHDAIMQGPRGETCLVNIKTLNEWDPKMTGVDWRQKLDSQRGAVLATELKNNSCKLAKWTANSILAGSEYLKLGYVSRVNFLDTSKHTILGTQQFRPREFATQIALNMDNAWGVLRCIIDICMKQPEGKLLILKDPSKGVIRIYDIPNSTFETDEEDDDDDEDDVENDDGDDEKDEGDGED.

A disordered region spans residues 95-136 (PGYMRNRNRFNQRGGYRRDNRGGRFQGQGGNMGMQNLSRGRD). An RNA gate region spans residues 294–308 (EFDLLTVGETANDLN). A disordered region spans residues 528–563 (IPNSTFETDEEDDDDDEDDVENDDGDDEKDEGDGED). The segment covering 534-563 (ETDEEDDDDDEDDVENDDGDDEKDEGDGED) has biased composition (acidic residues).

This sequence belongs to the eIF-3 subunit D family. Component of the eukaryotic translation initiation factor 3 (eIF-3) complex.

It is found in the cytoplasm. Functionally, mRNA cap-binding component of the eukaryotic translation initiation factor 3 (eIF-3) complex, which is involved in protein synthesis of a specialized repertoire of mRNAs and, together with other initiation factors, stimulates binding of mRNA and methionyl-tRNAi to the 40S ribosome. The eIF-3 complex specifically targets and initiates translation of a subset of mRNAs involved in cell proliferation. In the eIF-3 complex, eif3d specifically recognizes and binds the 7-methylguanosine cap of a subset of mRNAs. The polypeptide is Eukaryotic translation initiation factor 3 subunit D (Nematostella vectensis (Starlet sea anemone)).